The sequence spans 770 residues: ARF GTPase-activating protein GIT1 (770 aa).

The Arf-GAP domain occupies 1–124 (MSRKGPRAEV…AFVHKLPCRD (124 aa)). Positions 1–124 (MSRKGPRAEV…AFVHKLPCRD (124 aa)) are interaction with gamma-tubulin and localization to the centrosome. A C4-type zinc finger spans residues 11–34 (CADCSAPDPGWASISRGVLVCDEC). ANK repeat units follow at residues 132–161 (DLSK…QANF), 166–195 (KGTT…DPGS), and 199–228 (NGRT…ELTD). Tyrosine 224 is modified (phosphotyrosine). An interaction with PCLO region spans residues 245–374 (HYIIPQMADR…QGKSLSSPTD (130 aa)). The tract at residues 253-424 (DRSRQKCMSQ…NRARSMDSSD (172 aa)) is interaction with PTK2/FAK1. The segment at 254–376 (RSRQKCMSQS…KSLSSPTDNL (123 aa)) is interaction with ARHGEF7. Residues 363-425 (RQQGKSLSSP…RARSMDSSDL (63 aa)) form a disordered region. Residues 366–383 (GKSLSSPTDNLELSARSQ) show a composition bias toward polar residues. A phosphoserine mark is found at serine 368 and serine 371. Threonine 373 bears the Phosphothreonine mark. An interaction with NCK2 and GRIN3A region spans residues 375–596 (NLELSARSQS…QEGSRHASKL (222 aa)). The tract at residues 375–596 (NLELSARSQS…QEGSRHASKL (222 aa)) is required for localization at synapses. Residues serine 379 and serine 384 each carry the phosphoserine modification. Residue tyrosine 392 is modified to Phosphotyrosine. A phosphoserine mark is found at serine 394 and serine 397. Acidic residues predominate over residues 394–403 (SVASDEDTDQ). Phosphothreonine is present on threonine 401. Residues serine 419, serine 422, and serine 426 each carry the phosphoserine modification. The segment at 420 to 475 (MDSSDLSDGAVTLQEYLELKKALATSEAKVQQLMKVNSSLSDELRRLQREIHKLQA) is interaction with MAPK1. The interaction with IKBKG stretch occupies residues 429–629 (AVTLQEYLEL…EGKRFLELSK (201 aa)). Residues 449–483 (VQQLMKVNSSLSDELRRLQREIHKLQAENLQLRQP) adopt a coiled-coil conformation. Phosphoserine occurs at positions 507 and 545. The residue at position 546 (threonine 546) is a Phosphothreonine. Phosphotyrosine occurs at positions 554 and 563. Residues serine 570, serine 580, serine 601, and serine 605 each carry the phosphoserine modification. The span at 578–588 (PSSPLLSCSQE) shows a compositional bias: polar residues. A disordered region spans residues 578–615 (PSSPLLSCSQEGSRHASKLSRHGSGADSDYENTQSGDP). Phosphothreonine is present on threonine 610. Serine 639 is subject to Phosphoserine. The interaction with PXN and TGFB1I1 stretch occupies residues 646–770 (PGLPSTEDVI…VTITTREKKQ (125 aa)).

In terms of assembly, forms homodimers and possibly oligomers. May forms heterooligomers with GIT2. Interacts with G protein-coupled receptor kinases, including GRK2, GRK3, GRK5 and GRK6. Interacts with PPFIA1, PPFIA2 and PPFIA4. Interacts with GRIP1 and forms a ternary complex with PPFIA1 and GRIP1. Directly interacts with ARHGEF7/beta-PIX, forming in vitro a heptameric complex made of a GIT1 dimer and an ARHGEF7 trimer. Directly interacts with PXN/paxillin; this interaction is enhanced in the presence of ARHGEF7. Directly interacts (via C-terminus) with TGFB1I1/Hic-5 (via LD motif 3). Directly interacts with PTK2/FAK1. May interact with PTK2B/PYK2; this interaction may be indirect. Interacts with AMPA receptors GRIA2/3. Directly interacts with protein Piccolo/PCLO. Forms a complex with Ephrin-B1/EFNB1 and NCK2/GRB4 (via SH2); this interaction is important for spine morphogenesis and synapse formation. Interaction with NCK2 is transient and depends upon GIT1 phosphorylation at Tyr-392. Interacts with GRIN3A/GluN3A (via C-terminus); this interaction competes with GIT1 interaction with ARHGEF7 and limits synaptic localization of GIT1. Interacts with IKBKG/NEMO in resting bone mesenchymal stem cells, as well as in TNF-stimulated cells; this interaction may increase IKBKG affinity for 'Lys-63'-linked polyubiquitin chains. Interacts with GABA(A) receptors, including GABRB3 and GABRG2. Interacts with SCRIB. Interacts (via N- and C-terminus) with ENTR1/SDCCAG3 (via N-terminus); this interaction is direct. May form a tripartite complex with ENTR1 and PTPN13. Interacts with YWHAZ. Interacts with PAK1. Interacts with PAK3. Directly interacts (via N-terminus) with gamma-tubulin. Interacts with MAPK1 and MAPK3; this interaction is required for MAPK1/3 recruitment to focal adhesions. In terms of processing, phosphorylated on tyrosine residues by PTK2/FAK1 and SRC in growing fibroblasts. Phosphorylation at Tyr-392 is induced by activation of Ephrin-B1/EFNB1 and catalyzed by SRC family kinases. It is required for the interaction with NCK2 and for GIT1 recruitment to synapses in hippocampal neurons. As to expression, expressed in the brain (at protein level). Also expressed at high levels in lung and heart. In lung, expressed in endothelial cells, especially in capillaries; also expressed in smooth muscle and epithelial cells of bronchi (at protein level). Expressed in bone marrow mesenchymal stem cells, as well as in osteoclasts and bone marrow-derived macrophages (at protein level).

Its subcellular location is the cytoplasm. The protein localises to the presynapse. It is found in the postsynapse. It localises to the postsynaptic density. The protein resides in the cell junction. Its subcellular location is the focal adhesion. The protein localises to the cell projection. It is found in the lamellipodium. It localises to the cytoskeleton. The protein resides in the microtubule organizing center. Its subcellular location is the centrosome. The protein localises to the spindle pole. In terms of biological role, GTPase-activating protein for ADP ribosylation factor family members, including ARF1. Multidomain scaffold protein that interacts with numerous proteins and therefore participates in many cellular functions, including receptor internalization, focal adhesion remodeling, and signaling by both G protein-coupled receptors and tyrosine kinase receptors. Through PAK1 activation, positively regulates microtubule nucleation during interphase. Plays a role in the regulation of cytokinesis; for this function, may act in a pathway also involving ENTR1 and PTPN13. May promote cell motility both by regulating focal complex dynamics and by the activation of RAC1. May act as scaffold for MAPK1/3 signal transduction, recruiting MAPK1/3 to focal adhesions after EGF stimulation via a Src-dependent pathway, hence stimulating cell migration. Plays a role in brain development and function. Involved in the regulation of spine density and synaptic plasticity that is required for processes involved in learning. Plays an important role in dendritic spine morphogenesis and synapse formation. In hippocampal neurons, recruits guanine nucleotide exchange factors (GEFs), such as ARHGEF7/beta-PIX, to the synaptic membrane. These in turn locally activate RAC1, which is an essential step for spine morphogenesis and synapse formation. May contribute to the organization of presynaptic active zones through oligomerization and formation of a Piccolo/PCLO-based protein network, which includes ARHGEF7/beta-PIX and FAK1. In neurons, through its interaction with liprin-alpha family members, may be required for AMPA receptor (GRIA2/3) proper targeting to the cell membrane. In complex with GABA(A) receptors and ARHGEF7, plays a crucial role in regulating GABA(A) receptor synaptic stability, maintaining GPHN/gephyrin scaffolds and hence GABAergic inhibitory synaptic transmission, by locally coordinating RAC1 and PAK1 downstream effector activity, leading to F-actin stabilization. May also be important for RAC1 downstream signaling pathway through PAK3 and regulation of neuronal inhibitory transmission at presynaptic input. Required for successful bone regeneration during fracture healing. The function in intramembranous ossification may, at least partly, exerted by macrophages in which GIT1 is a key negative regulator of redox homeostasis, IL1B production, and glycolysis, acting through the ERK1/2/NRF2/NFE2L2 axis. May play a role in angiogenesis during fracture healing. In this process, may regulate activation of the canonical NF-kappa-B signal in bone mesenchymal stem cells by enhancing the interaction between NEMO and 'Lys-63'-ubiquitinated RIPK1/RIP1, eventually leading to enhanced production of VEGFA and others angiogenic factors. Essential for VEGF signaling through the activation of phospholipase C-gamma and ERK1/2, hence may control endothelial cell proliferation and angiogenesis. This Mus musculus (Mouse) protein is ARF GTPase-activating protein GIT1 (Git1).